A 213-amino-acid polypeptide reads, in one-letter code: mRNA-decapping protein OPG121 (213 aa).

N(7)-methyl-GTP is bound by residues E16 and R50. Positions 30 to 209 (KDTHVFAACI…EYLSYIYNML (180 aa)) constitute a Nudix hydrolase domain. The Nudix box signature appears at 111 to 132 (GKLDKKESIKDCLRRELKEESD). Residue E126 is the Nucleophile of the active site. Residues E126 and E130 each coordinate Mg(2+). Residue D151 coordinates N(7)-methyl-GTP. E183 provides a ligand contact to Mg(2+).

The protein belongs to the Nudix hydrolase family. The cofactor is Mg(2+). Mn(2+) serves as cofactor.

It catalyses the reaction a 5'-end (N(7)-methyl 5'-triphosphoguanosine)-guanosine in mRNA + H2O = a 5'-end phospho-guanosine in mRNA + N(7)-methyl-GDP + 2 H(+). Its function is as follows. Decapping enzyme that remove the protective 5'-cap from both host and viral mRNAs to commit transcripts for decay by the cellular exonuclease XRN1. Accelerates viral and cellular mRNA turnover to eliminate competing host mRNAs and allow stage-specific synthesis of viral proteins. Acceleration of the turnover of cellular transcripts may even promote the shutoff of host protein synthesis. This Vaccinia virus (strain Western Reserve) (VACV) protein is mRNA-decapping protein OPG121 (OPG121).